The sequence spans 217 residues: Probable GTP-binding protein EngB (217 aa).

The EngB-type G domain occupies 27–201 (GGVEIAFAGR…AQTLSGWYLA (175 aa)). GTP is bound by residues 35-42 (GRSNAGKS), 62-66 (GRTQL), 80-83 (DLPG), 147-150 (TKAD), and 180-182 (FSS). Mg(2+) is bound by residues Ser-42 and Thr-64.

This sequence belongs to the TRAFAC class TrmE-Era-EngA-EngB-Septin-like GTPase superfamily. EngB GTPase family. Requires Mg(2+) as cofactor.

Its function is as follows. Necessary for normal cell division and for the maintenance of normal septation. The polypeptide is Probable GTP-binding protein EngB (Aeromonas salmonicida (strain A449)).